The sequence spans 167 residues: U-scoloptoxin(08)-Er5b (167 aa).

Residues 1-22 (MKTNCEFPLLCLLIVLVANVEG) form the signal peptide. Residues 23–94 (EVEDTGLKMV…KRLWRNWERR (72 aa)) constitute a propeptide that is removed on maturation. RLWRNWE repeat units follow at residues 34–40 (RLWRNWE), 61–67 (RLWRNWE), and 86–92 (RLWRNWE). Gln-95 is modified (pyrrolidone carboxylic acid). The RLWRNWE 4; approximate repeat unit spans residues 107–113 (ELWRNWE). Residues 112–118 (WEDLKRR) constitute a propeptide that is removed on maturation. Residue Gln-119 is modified to Pyrrolidone carboxylic acid. Residues 134-140 (RLWRNWE) form an RLWRNWE 5 repeat. Residues 139–167 (WEDNHATLRKRSADSLSRQKRLGKERGKE) constitute a propeptide that is removed on maturation. The tract at residues 147 to 167 (RKRSADSLSRQKRLGKERGKE) is disordered.

This sequence belongs to the scoloptoxin-08 family. As to expression, expressed by the venom gland.

Its subcellular location is the secreted. The polypeptide is U-scoloptoxin(08)-Er5b (Ethmostigmus rubripes (Giant centipede)).